Reading from the N-terminus, the 606-residue chain is V-type proton ATPase catalytic subunit A (606 aa).

239 to 246 (GAFGCGKT) contacts ATP.

Belongs to the ATPase alpha/beta chains family. V-ATPase is a heteromultimeric enzyme made up of two complexes: the ATP-hydrolytic V1 complex and the proton translocation V0 complex. The V1 complex consists of three catalytic AB heterodimers that form a heterohexamer, three peripheral stalks each consisting of EG heterodimers, one central rotor including subunits D and F, and the regulatory subunits C and H. The proton translocation complex V0 consists of the proton transport subunit a, a ring of proteolipid subunits c9c'', rotary subunit d, subunits e and f, and the accessory subunits vah-19/Ac45 and vah-20/PRR.

It catalyses the reaction ATP + H2O + 4 H(+)(in) = ADP + phosphate + 5 H(+)(out). Functionally, catalytic subunit of the V1 complex of vacuolar(H+)-ATPase (V-ATPase), a multisubunit enzyme composed of a peripheral complex (V1) that hydrolyzes ATP and a membrane integral complex (V0) that translocates protons. V-ATPase is responsible for acidifying and maintaining the pH of intracellular compartments and in some cell types, is targeted to the plasma membrane, where it is responsible for acidifying the extracellular environment. Required along with other vacuolar ATPase components for the removal of protein aggregates which form in immature oocytes in the distal gonad. This removal occurs as the oocytes mature and move to the proximal gonad, is triggered by the introduction of sperm through mating and occurs before fertilization. The introduction of sperm triggers V-ATPase accumulation in proximal oocytes and induces lysosomal acidification which leads to engulfing of protein aggregates by lysosomes and subsequent clearance of the aggregates. Lysosomal acidification also leads to changes in mitochondrial morphology and function. Mitochondria in distal immature oocytes are fragmented, produce high levels of reactive oxygen species (ROS) and have high membrane potential, indicative of metabolic inactivity. In contrast, mitochondria in proximal mature oocytes are tubular with lower ROS levels and membrane potential, indicative of an active metabolic state required for aggregate mobilization before clearance. Involved in receptor-mediated endocytosis. This chain is V-type proton ATPase catalytic subunit A, found in Caenorhabditis briggsae.